A 270-amino-acid polypeptide reads, in one-letter code: MGYIKRMALYMSVFLLIIFIVGCRNMKDEQKKEEQTNKTDSKEEQIKKSFEKTLDMYPIKNLEELYDKEGYRDGEFKKGDKGMWTIYTDFAKSNKQGGLSNEGMVLYLDRNTRTAKGHYFVKTFYNKGKFPDRKNYKVEMKNNKIILLDKVEDTNLKKRIENFKFFGQYANLKELKNYNNGDVSINENVPSYDAKFKMSNKDENVKQLRSRYNIPTDKAPVLKMHIDGNLKGSSVGYKKLEIDFSKGGKSDLSVIDSLNFQPAKVDEDDE.

The N-terminal stretch at 1-22 (MGYIKRMALYMSVFLLIIFIVG) is a signal peptide. A lipid anchor (N-palmitoyl cysteine) is attached at cysteine 23. Cysteine 23 is lipidated: S-diacylglycerol cysteine.

It belongs to the staphylococcal tandem lipoprotein family.

The protein localises to the cell membrane. This is an uncharacterized protein from Staphylococcus aureus (strain COL).